Reading from the N-terminus, the 409-residue chain is Casein kinase II subunit alpha-1 (409 aa).

An N-terminal signal peptide occupies residues 1 to 35 (MIDTLFFLFFLFFDSPLRRLLLLCAVLALRAPTAH). The N-linked (GlcNAc...) asparagine glycan is linked to N72. The region spanning 110-395 (YEVVRKVGRG…AKEAMAHAYF (286 aa)) is the Protein kinase domain. Residues 116-124 (VGRGKYSEV) and K139 each bind ATP. N-linked (GlcNAc...) asparagine glycosylation is present at N188. The Proton acceptor role is filled by D227.

The protein belongs to the protein kinase superfamily. Ser/Thr protein kinase family. CK2 subfamily. In terms of assembly, heterotetramer of two catalytic alpha subunits and two regulatory beta subunits. As to expression, seems to be present in all plant organs. But seems to be less expressed than CKA2.

The protein localises to the nucleus. Its subcellular location is the nucleolus. The enzyme catalyses L-seryl-[protein] + ATP = O-phospho-L-seryl-[protein] + ADP + H(+). It catalyses the reaction L-threonyl-[protein] + ATP = O-phospho-L-threonyl-[protein] + ADP + H(+). Its activity is regulated as follows. Inhibited by heparin. In terms of biological role, casein kinases are operationally defined by their preferential utilization of acidic proteins such as caseins as substrates. Phosphorylates casein in vitro. The alpha chain contains the catalytic site. The tetrameric holoenzyme CK2, composed of two alpha and two beta subunits, phosphorylates the transcription factor GBFl, resulting in stimulation of its DNA binding activity. CK2 phosphorylates the transcription factor PIF1 after an exposure to light, resulting in a proteasome-dependent degradation of PIF1 and promotion of photomorphogenesis. CK2 phosphorylates translation initiation factors. May participate in the regulation of the initiation of translation. Acts as a circadian clock component that maintains the correct period length through phosphorylation of CCA1. Required for the maintenance and control of genomic stability and chromatin structure. May act as an ectokinase that phosphorylates several extracellular proteins. The protein is Casein kinase II subunit alpha-1 of Arabidopsis thaliana (Mouse-ear cress).